The chain runs to 124 residues: Large ribosomal subunit protein bL20 (124 aa).

The protein belongs to the bacterial ribosomal protein bL20 family.

Its function is as follows. Binds directly to 23S ribosomal RNA and is necessary for the in vitro assembly process of the 50S ribosomal subunit. It is not involved in the protein synthesizing functions of that subunit. This is Large ribosomal subunit protein bL20 from Ehrlichia canis (strain Jake).